The sequence spans 1157 residues: ATP-dependent helicase/deoxyribonuclease subunit B (1157 aa).

Residues 1–299 enclose the UvrD-like helicase ATP-binding domain; sequence MSIRFIIGRA…SHLEKYFFVR (299 aa). Residue 8 to 15 coordinates ATP; the sequence is GRAGAGKT. The UvrD-like helicase C-terminal domain maps to 279–590; that stretch reads GNTARFKSPA…LVASLERSRN (312 aa). [4Fe-4S] cluster contacts are provided by Cys792, Cys1112, Cys1115, and Cys1121.

The protein belongs to the helicase family. AddB/RexB type 1 subfamily. As to quaternary structure, heterodimer of AddA and AddB. It depends on Mg(2+) as a cofactor. [4Fe-4S] cluster serves as cofactor.

The heterodimer acts as both an ATP-dependent DNA helicase and an ATP-dependent, dual-direction single-stranded exonuclease. Recognizes the chi site generating a DNA molecule suitable for the initiation of homologous recombination. The AddB subunit has 5' -&gt; 3' nuclease activity but not helicase activity. In Pelotomaculum thermopropionicum (strain DSM 13744 / JCM 10971 / SI), this protein is ATP-dependent helicase/deoxyribonuclease subunit B.